We begin with the raw amino-acid sequence, 296 residues long: Protoheme IX farnesyltransferase (296 aa).

9 helical membrane passes run Pro-11 to Gly-31, Tyr-35 to Phe-55, Val-84 to Ala-104, Leu-107 to Met-127, Val-132 to Ala-152, Leu-162 to Phe-182, Ile-208 to Ala-228, Gly-229 to Ser-249, and Leu-264 to Met-284.

Belongs to the UbiA prenyltransferase family. Protoheme IX farnesyltransferase subfamily.

Its subcellular location is the cell inner membrane. The catalysed reaction is heme b + (2E,6E)-farnesyl diphosphate + H2O = Fe(II)-heme o + diphosphate. It functions in the pathway porphyrin-containing compound metabolism; heme O biosynthesis; heme O from protoheme: step 1/1. Its function is as follows. Converts heme B (protoheme IX) to heme O by substitution of the vinyl group on carbon 2 of heme B porphyrin ring with a hydroxyethyl farnesyl side group. The polypeptide is Protoheme IX farnesyltransferase (Pectobacterium carotovorum subsp. carotovorum (strain PC1)).